Reading from the N-terminus, the 161-residue chain is Putative 4-hydroxy-4-methyl-2-oxoglutarate aldolase (161 aa).

Residues glycine 75–leucine 78 and arginine 97 each bind substrate. Aspartate 98 provides a ligand contact to a divalent metal cation.

Belongs to the class II aldolase/RraA-like family. As to quaternary structure, homotrimer. Requires a divalent metal cation as cofactor.

It catalyses the reaction 4-hydroxy-4-methyl-2-oxoglutarate = 2 pyruvate. The catalysed reaction is oxaloacetate + H(+) = pyruvate + CO2. In terms of biological role, catalyzes the aldol cleavage of 4-hydroxy-4-methyl-2-oxoglutarate (HMG) into 2 molecules of pyruvate. Also contains a secondary oxaloacetate (OAA) decarboxylase activity due to the common pyruvate enolate transition state formed following C-C bond cleavage in the retro-aldol and decarboxylation reactions. The protein is Putative 4-hydroxy-4-methyl-2-oxoglutarate aldolase of Marinomonas sp. (strain MWYL1).